The chain runs to 436 residues: Mitochondrial distribution and morphology protein 12 (436 aa).

An SMP-LTD domain is found at Met1–Ile436. Positions Asp73–Glu84 are enriched in acidic residues. 3 disordered regions span residues Asp73–Thr98, Ala184–Glu275, and Gly352–Lys380. The segment covering Glu85–Thr98 has biased composition (basic and acidic residues). Composition is skewed to polar residues over residues Pro190 to Lys206 and Asp222 to Ser243. Residues Ser244–Asp255 are compositionally biased toward basic and acidic residues. A compositionally biased stretch (polar residues) spans Pro256–Asn267.

Belongs to the MDM12 family. In terms of assembly, component of the ER-mitochondria encounter structure (ERMES) or MDM complex, composed of mmm1, mdm10, mdm12 and mdm34. A mmm1 homodimer associates with one molecule of mdm12 on each side in a pairwise head-to-tail manner, and the SMP-LTD domains of mmm1 and mdm12 generate a continuous hydrophobic tunnel for phospholipid trafficking.

Its subcellular location is the mitochondrion outer membrane. It is found in the endoplasmic reticulum membrane. In terms of biological role, component of the ERMES/MDM complex, which serves as a molecular tether to connect the endoplasmic reticulum (ER) and mitochondria. Components of this complex are involved in the control of mitochondrial shape and protein biogenesis, and function in nonvesicular lipid trafficking between the ER and mitochondria. Mdm12 is required for the interaction of the ER-resident membrane protein mmm1 and the outer mitochondrial membrane-resident beta-barrel protein mdm10. The mdm12-mmm1 subcomplex functions in the major beta-barrel assembly pathway that is responsible for biogenesis of all mitochondrial outer membrane beta-barrel proteins, and acts in a late step after the SAM complex. The mdm10-mdm12-mmm1 subcomplex further acts in the TOM40-specific pathway after the action of the mdm12-mmm1 complex. Essential for establishing and maintaining the structure of mitochondria and maintenance of mtDNA nucleoids. The protein is Mitochondrial distribution and morphology protein 12 of Emericella nidulans (strain FGSC A4 / ATCC 38163 / CBS 112.46 / NRRL 194 / M139) (Aspergillus nidulans).